The sequence spans 369 residues: 4-hydroxy-3-methylbut-2-en-1-yl diphosphate synthase (flavodoxin) (369 aa).

Positions 270, 273, 305, and 312 each coordinate [4Fe-4S] cluster.

Belongs to the IspG family. [4Fe-4S] cluster serves as cofactor.

It carries out the reaction (2E)-4-hydroxy-3-methylbut-2-enyl diphosphate + oxidized [flavodoxin] + H2O + 2 H(+) = 2-C-methyl-D-erythritol 2,4-cyclic diphosphate + reduced [flavodoxin]. It functions in the pathway isoprenoid biosynthesis; isopentenyl diphosphate biosynthesis via DXP pathway; isopentenyl diphosphate from 1-deoxy-D-xylulose 5-phosphate: step 5/6. Converts 2C-methyl-D-erythritol 2,4-cyclodiphosphate (ME-2,4cPP) into 1-hydroxy-2-methyl-2-(E)-butenyl 4-diphosphate. This is 4-hydroxy-3-methylbut-2-en-1-yl diphosphate synthase (flavodoxin) from Pseudomonas putida (strain GB-1).